The sequence spans 697 residues: MPDLLIELFSEEIPARMQARAREDLKKLVTDGLVEAGLTYASAGAFSTPRRLVLSVEGLSAESPTLREERKGPKADAPAAAIEGFLRSTGLTRDQLETREDKKGAVLFAVVEKPGRPAPEIVAEVLERTIRTFPWPKSMRWGTGSLRWVRPLQSILCLLSDEAGAEVVPMTLDGLTAGNSTEGHRFMAPARFAVSGFEDYRAKLARAFVMLDASEREQAIWHEATTQAFAQGLEVVPDAALLSEVAGLVEWPVVLMGAIGEDFLGLPPEVLQTSMREHQKFFSVTNPATGRIEKFVTVANRETADHGETILKGNGKVLSARLSDARFFWENDLRTVKTAGLEGMAEGLKQVTFHNRLGSQAARIARIEALAREIAPLVGASPDLAAEAARVAKADLQSAMVGEFPELQGTMGSYYARAAGLPEAVAQACKAHYQPLGPSDAVPTDPVSVAVALADKIDTLAGFWRIGEKPTGSKDPFALRRAALGVIRLLLTNNSRAGLMGIMLPAMNRHLEPFDTSDFTPYERDLLAFFHDRLKVHLREQGIRHDVIDACLAMPGNDDLTLLVKRAEALSAFLKTDDGTNLLQGFKRANNILTQAEAKDGVEYSFGADPKFAETDAERALFAALETAEAAIGPALQAEDFAAAMSAMAALRAPIDAFFETVQVNADNAVLRRNRLNMLHSIRATCARVADLTRIEG.

This sequence belongs to the class-II aminoacyl-tRNA synthetase family. Tetramer of two alpha and two beta subunits.

It localises to the cytoplasm. It catalyses the reaction tRNA(Gly) + glycine + ATP = glycyl-tRNA(Gly) + AMP + diphosphate. This is Glycine--tRNA ligase beta subunit from Cereibacter sphaeroides (strain ATCC 17023 / DSM 158 / JCM 6121 / CCUG 31486 / LMG 2827 / NBRC 12203 / NCIMB 8253 / ATH 2.4.1.) (Rhodobacter sphaeroides).